Consider the following 471-residue polypeptide: ATP synthase subunit beta (471 aa).

156 to 163 lines the ATP pocket; the sequence is GGAGVGKT.

It belongs to the ATPase alpha/beta chains family. F-type ATPases have 2 components, CF(1) - the catalytic core - and CF(0) - the membrane proton channel. CF(1) has five subunits: alpha(3), beta(3), gamma(1), delta(1), epsilon(1). CF(0) has three main subunits: a(1), b(2) and c(9-12). The alpha and beta chains form an alternating ring which encloses part of the gamma chain. CF(1) is attached to CF(0) by a central stalk formed by the gamma and epsilon chains, while a peripheral stalk is formed by the delta and b chains.

The protein localises to the cell membrane. The enzyme catalyses ATP + H2O + 4 H(+)(in) = ADP + phosphate + 5 H(+)(out). Its function is as follows. Produces ATP from ADP in the presence of a proton gradient across the membrane. The catalytic sites are hosted primarily by the beta subunits. This is ATP synthase subunit beta from Lawsonia intracellularis (strain PHE/MN1-00).